The sequence spans 455 residues: Protein YmfN (455 aa).

The protein belongs to the phage terminase family.

This is Protein YmfN (ymfN) from Escherichia coli (strain K12).